The primary structure comprises 396 residues: Lipid-A-disaccharide synthase (396 aa).

Belongs to the LpxB family.

The enzyme catalyses a lipid X + a UDP-2-N,3-O-bis[(3R)-3-hydroxyacyl]-alpha-D-glucosamine = a lipid A disaccharide + UDP + H(+). The protein operates within bacterial outer membrane biogenesis; LPS lipid A biosynthesis. Functionally, condensation of UDP-2,3-diacylglucosamine and 2,3-diacylglucosamine-1-phosphate to form lipid A disaccharide, a precursor of lipid A, a phosphorylated glycolipid that anchors the lipopolysaccharide to the outer membrane of the cell. This is Lipid-A-disaccharide synthase from Hahella chejuensis (strain KCTC 2396).